The sequence spans 314 residues: DNA-directed RNA polymerase subunit alpha (314 aa).

Residues Met-1–Asn-227 are alpha N-terminal domain (alpha-NTD). The segment at Lys-241–Asn-314 is alpha C-terminal domain (alpha-CTD).

It belongs to the RNA polymerase alpha chain family. As to quaternary structure, in plastids the minimal PEP RNA polymerase catalytic core is composed of four subunits: alpha, beta, beta', and beta''. When a (nuclear-encoded) sigma factor is associated with the core the holoenzyme is formed, which can initiate transcription.

It localises to the plastid. It is found in the chloroplast. It catalyses the reaction RNA(n) + a ribonucleoside 5'-triphosphate = RNA(n+1) + diphosphate. In terms of biological role, DNA-dependent RNA polymerase catalyzes the transcription of DNA into RNA using the four ribonucleoside triphosphates as substrates. The polypeptide is DNA-directed RNA polymerase subunit alpha (Rhodomonas salina (Cryptomonas salina)).